The chain runs to 392 residues: 26S proteasome regulatory subunit 8 homolog (392 aa).

176 to 183 (GPPGTGKT) contributes to the ATP binding site.

Belongs to the AAA ATPase family. As to quaternary structure, the 26S proteasome consists of a 20S proteasome core and two 19S regulatory subunits. The 20S proteasome core is composed of 28 subunits that are arranged in four stacked rings, resulting in a barrel-shaped structure. The two end rings are each formed by seven alpha subunits, and the two central rings are each formed by seven beta subunits. The catalytic chamber with the active sites is on the inside of the barrel.

The protein localises to the cytoplasm. Its subcellular location is the nucleus. Functionally, acts as a regulatory subunit of the 26S proteasome which degrades poly-ubiquitinated proteins in the cytoplasm and in the nucleus. It is essential for the regulated turnover of proteins and for the removal of misfolded proteins. The proteasome is a multicatalytic proteinase complex that is characterized by its ability to cleave peptides with Arg, Phe, Tyr, Leu, and Glu adjacent to the leaving group at neutral or slightly basic pH. The sequence is that of 26S proteasome regulatory subunit 8 homolog (RPT6) from Encephalitozoon cuniculi (strain GB-M1) (Microsporidian parasite).